The primary structure comprises 486 residues: FAD-dependent oxidoreductase domain-containing protein 1 (486 aa).

A helical membrane pass occupies residues 66-86 (VVVVGGGVLGLSVAYWLKQLE).

In terms of assembly, associates with components of the mitochondrial respiratory chain complex I. The cofactor is FAD.

The protein localises to the mitochondrion inner membrane. Functionally, required for the assembly of the mitochondrial membrane respiratory chain NADH dehydrogenase (Complex I). Involved in mid-late stages of complex I assembly. This is FAD-dependent oxidoreductase domain-containing protein 1 (FOXRED1) from Macaca fascicularis (Crab-eating macaque).